A 310-amino-acid polypeptide reads, in one-letter code: Transcription initiation factor IIA subunit 1 (310 aa).

Disordered stretches follow at residues 52-78 (AISNQNDPDETTATTTTTQPQSTLSTV), 91-197 (IQLN…NNKD), and 218-261 (VIPQ…DDPD). Composition is skewed to low complexity over residues 62 to 77 (TTATTTTTQPQSTLST) and 122 to 160 (SNGTSPTMNSSNGSNNNNNNNNSNNSSNSSNNNNLPSSL). Composition is skewed to acidic residues over residues 173–183 (TLDESDNDDDN), 225–236 (LNDDDDLDDEEI), and 246–261 (DSLGSDLDDDDDDDPD).

This sequence belongs to the TFIIA subunit 1 family. In terms of assembly, TFIIA is a heterodimer of the large subunit 1 and a small subunit gamma.

It localises to the nucleus. Its function is as follows. TFIIA is a component of the transcription machinery of RNA polymerase II and plays an important role in transcriptional activation. TFIIA in a complex with tbp mediates transcriptional activity. This Dictyostelium discoideum (Social amoeba) protein is Transcription initiation factor IIA subunit 1 (gtf2a1).